The following is a 503-amino-acid chain: Putative aldehyde dehydrogenase-like protein C9E9.09c (503 aa).

247–252 (GSTGVG) serves as a coordination point for NAD(+). Serine 248 bears the Phosphoserine mark. The active-site Proton acceptor is the glutamate 270. The active-site Nucleophile is cysteine 304. Serine 501 carries the phosphoserine modification.

It belongs to the aldehyde dehydrogenase family.

The polypeptide is Putative aldehyde dehydrogenase-like protein C9E9.09c (Schizosaccharomyces pombe (strain 972 / ATCC 24843) (Fission yeast)).